The following is a 569-amino-acid chain: MIASRYVASELESVTRKLELQLYERAAISEVLEQTSTDLELAKANEVLQTIKEEADACVAAINGGQKFYTIKYDQILSGLESLSGGQWSVGSPLEPLIRDGISDYLHILLYYALLSKNLAKLPQLLLDQEYYGHVSRCSWFMRLFYGLQIMPVKLIEFFRGHALQELPSKLRQTLRIHNFQLVGLPTQRAWQWTKLPIAMVDTDIIQKTASLDSQLDINVKKFGKLLREFPRQKSDRLEVLSDFLDLKPGSSEFAVVRAVQKWNVDSCAPQPNWIVRYWPTILIALAGGPAGIAAIWNARNDIAAFIKHNLFEFARDLVKNWLVEPLRNIWSTVHHDPTSSIAIMSQGTLDTEINSLQRMLIDFLKEHEYANTVDTSVLMKEIEQGNLTQFMEIYEAQLRKPIRNLVTGDLIRSLLIQIQKGKVDGSLAIHGIDKLLQSQQLVFGIVSISPALLILYVLCNSLTKLVKYGTVWSKGAKYRRSVSVSLNNVERLLNSPIEEFDGDKGNWNLGLLTLEMANLREYGAKLVPHSRTAEWCRDIDEMASSSALSTTGKLNVINRIYHVYGKYF.

A run of 2 helical transmembrane segments spans residues 279–299 (WPTILIALAGGPAGIAAIWNA) and 442–462 (LVFGIVSISPALLILYVLCNS).

The protein localises to the mitochondrion membrane. Its function is as follows. Involved in the mitochondrial expression of subunits 6 and 8 of the F0-F1 ATP synthase. This is Nuclear control of ATPase protein 2 (NCA2) from Eremothecium gossypii (strain ATCC 10895 / CBS 109.51 / FGSC 9923 / NRRL Y-1056) (Yeast).